We begin with the raw amino-acid sequence, 463 residues long: Sugar transporter ERD6-like 7 (463 aa).

12 consecutive transmembrane segments (helical) span residues 26-46 (WMVY…GSCA), 69-89 (LFGS…GPIA), 103-123 (AFCV…ALDL), 126-146 (LATG…IAEI), 157-177 (TLNQ…GTLV), 181-201 (VLAL…FFIP), 264-284 (VLIA…GICF), 299-319 (LGMI…APIV), 327-347 (LLLV…VSFY), 357-377 (AVPV…SAGM), 396-416 (VAGG…SYTF), and 426-446 (GTFL…IAIV).

This sequence belongs to the major facilitator superfamily. Sugar transporter (TC 2.A.1.1) family.

It is found in the membrane. In terms of biological role, sugar transporter. This is Sugar transporter ERD6-like 7 from Arabidopsis thaliana (Mouse-ear cress).